Reading from the N-terminus, the 4451-residue chain is MSTFKKEHVQDMYRLSPMQEGMLFHALLDKDKNAHLVQMSIAIEGIVDVELLSESLNILIDRYDVFRTTFLHEKIKQPLQVVLKERPVQLQFKDISSLDEEKREQAIEQYKYQDGETVFDLTRDPLMRVAIFQTGKVNYQMIWSFHHILMDGWCFNIIFNDLFNIYLSLKEKKPLQLEAVQPYKQFIKWLEKQDKQEALRYWKEHLMNYDQSVTLPKKKAAINNTTYEPAQFRFAFDKVLTQQLLRIANQSQVTLNIVFQTIWGIVLQKYNSTNHVVYGSVVSGRPSEISGIEKMVGLFINTLPLRIQTQKDQSFIELVKTVHQNVLFSQQHEYFPLYEIQNHTELKQNLIDHIMVIENYPLVEELQKNSIMQKVGFTVRDVKMFEPTNYDMTVMVLPRDEISVRLDYNAAVYDIDFIKKIEGHMKEVALCVANNPHVLVQDVPLLTKQEKQHLLVELHDSITEYPDKTIHQLFTEQVEKTPEHVAVVFEDEKVTYRELHERSNQLARFLREKGVKKESIIGIMMERSVEMIVGILGILKAGGAFVPIDPEYPKERIGYMLDSVRLVLTQRHLKDKFAFTKETIVIEDPSISHELTEEIDYINESEDLFYIIYTSGTTGKPKGVMLEHKNIVNLLHFTFEKTNINFSDKVLQYTTCSFDVCYQEIFSTLLSGGQLYLIRKETQRDVEQLFDLVKRENIEVLSFPVAFLKFIFNEREFINRFPTCVKHIITAGEQLVVNNEFKRYLHEHNVHLHNHYGPSETHVVTTYTINPEAEIPELPPIGKPISNTWIYILDQEQQLQPQGIVGELYISGANVGRGYLNNQELTAEKFFADPFRPNERMYRTGDLARWLPDGNIEFLGRADHQVKIRGHRIELGEIEAQLLNCKGVKEAVVIDKADDKGGKYLCAYVVMEVEVNDSELREYLGKALPDYMIPSFFVPLDQLPLTPNGKIDRKSLPNLEGIVNTNAKYVVPTNELEEKLAKIWEEVLGISQIGIQDNFFSLGGHSLKAITLISRMNKECNVDIPLRLLFEAPTIQEISNYINGAKKESYVAIQPVPEQEYYPVSSVQKRMFILNEFDRSGTAYNLPGVMFLDGKLNYRQLEAAVKKLVERHEALRTSFHSINGEPVQRVHQNVELQIAYSESTEDQVERIIAEFMQPFALEVRPLLRVGLVKLEAERHLFIMDMHHIISDGVSMQIMIQEIADLYKEKELPTLGIQYKDFTVWHNRLLQSDVIEKQEAYWLNVFTEEIPVLNLPTDYPRPTIQSFDGKRFTFSTGKQLMDDLYKVATETGTTLYMVLLAAYNVFLSKYSGQDDIVVGTPIAGRSHADVENMLGMFVNTLAIRSRLNNEDTFKDFLANVKQTALHAYENPDYPFDTLVEKLGIQRDLSRNPLFDTMFVLQNTDRKSFEVEQITITPYVPNSRHSKFDLTLEVSEEQNEILLCLEYCTKLFTDKTVERMAGHFLQILHAIVGNPTIIISEIEILSEEEKQHILFEFNDTKTTYPHMQTIQGLFEEQVEKTPDHVAVGWKDQTLTYRELNERANQVARVLRQKGVQPDNIVGLLVERSPEMLVGIMGILKAGGAYLPLDPEYPADRISYMIQDCGVRIMLTQQHLLSLVHDEFDCVILDEDSLYKGDSSNLAPVNQAGDLAYIMYTSGSTGKPKGVMVEHRNVIRLVKNTNYVQVREDDRIIQTGAIGFDALTFEVFGSLLHGAELYPVTKDVLLDAEKLHKFLQANQITIMWLTSPLFNQLSQGTEEMFAGLRSLIVGGDALSPKHINNVKRKCPNLTMWNGYGPTENTTFSTCFLIDKEYDDNIPIGKAISNSTVYIMDRYGQLQPVGVPGELCVGGDGVARGYMNQPALTEEKFVPNPFAPGERMYRTGDLARWLPDGTIEYLGRIDQQVKIRGYRIEPGEIETLLVKHKKVKESVIMVVEDNNGQKALCAYYVPEEEVTVSELREYIAKELPVYMVPAYFVQIEQMPLTQNGKVNRSALPKPDGEFGTATEYVAPSSDIEMKLAEIWHNVLGVNKIGVLDNFFELGGHSLRAMTMISQVHKEFDVELPLKVLFETPTISALAQYIADGQKGMYLAIQPVTPTDYYPVSSAQKRMYILYEFEGAGITYNVPNVMFIEGKLDYQRFEYAIKSLVNRHEALRTSFYSLNGEPVQRVHQNVELQIAYSEAKEDEIEQIVESFVQPFDLEIAPLLRVGLVKLASDRYLFLMDMHHIISDGVSMQIITKEIADLYKGKELAELHIQYKDFAVWQNEWFQSDALEKQKTYWLNTFAEDIPVLNLSTDYPRPTIQSFEGDIVTFSAGKQLAEELKRLAAETGTTLYMLLLAAYNVLLHKYSGQEEIVVGTPIAGRSHADVENIVGMFVNTLALKNTPIAVRTFHEFLLEVKQNALEAFENQDYPFENLIEKLQVRRDLSRNPLFDTMFSLSNIDEQVEIGIEGLNFSPYEMQYWIAKFDISFDILEKQDDIQFYFNYCTNLFKKETIERLATHFMHILQEIVINPEIKLCEINMLSEEEQQRVLYDFNGTDATYATNKIFHELFEEQVEKTPDHIAVIDEREKLSYQELNAKANQLARVLRQKGVQPNSMVGIMVDRSLDMIVGMLGVLKAGGAYVPIDIDYPQERISYMMEDSGAALLLTQQKLTQQIAFSGDILYLDQEEWLHEEASNLEPIARPHYIAYIIYTSGTTGKPKGVMIEHQSYVNVAMAWKDAYRLDTFPVRLLQMASFAFAFDVSAGDFARALLTGGQLIVCPNEVKMDPASLYAIIKKYDITIFEATPALVIPLMEYIYEQKLDISQLQILIVGSDSCSMEDFKTLVSRFGSTIRIVNSYGVTEACIDSSYYEQPLSSLHVTGTVPIGKPYANMKMYIMNQYLQIQPVGVIGELCIGGAGVARGYLNRPDLTAEKFVPNPFVPGEKLYRTGDLARWMPDGNVEFLGRNDHQVKIRGIRIELGEIEAQLRKHDSIKEATVIAREDHMKEKYLCAYMVTEGEVNVAELRAYLANDRAAMIPSYFVSLEAMPLTANGKIDKRSLPEPDGSISIGTEYDRPRTMLEGKLEEIWKDVLGLQRVGIHDDFFTIGGHSLKAMAVISQVHKECQTEVPLRVLFETPTIQGLAKYIEETDTEQYMAIQPVSGQDYYPVSSAQKRMFIVNQFVGVGISYNMPSIMLIEGKLERTRLESAFKRLIERHESLRTSFEIINGKPVQKIHEEVDFNMSYQVASNEQVEKMIDEFIQPFDLSVAPLLRVELLKLEEDRHVLIFDMHHIISDGISSNILMKELGELYQGNALPELRIQYKDFAVWQNEWFQSEAFKKQEEYWVNVFADERPILDIPTDYPRPMQQSFDGAQLTFGTGKQLMDGLYRVATETGTTLYMVLLAAYNVLLSKYSGQEDIIVGTPIVGRSHTDLENIVGMFVNTLAMRNKPEGEKTFKAFVSEIKQNALAAFENQDYPFEELIEKLEIQRDLSRNPLFDTLFSLQNIGEESFELAELTCKPFDLVSKLEHAKFDLSLVAVVFEEEIAFGLQYCTKLYKEKTVEQLAQHFIQIVKAIVENPDVKLSDIDMLSEEEKKQIMLEFNDTKIQYTQNQTIQELFEEQVKKTPEHIAIVWEGQALIYHELNIKANQLARVLREKGVTPNHPVAIMTERSLEMIVGIFSILKAGGAYVPIDPAYPQERIQYLLEDSGAALLLTQSHVLNKLPVDIEWLDLTDEQNYVEDGTNLPFMNQSTDLAYIIYTSGTTGKPKGVMIEHQSIINCLQWRKEEYEFGPGDTALQVFSFAFDGFVASLFAPILAGATSVLPKEEEAKDPVALKKLIASEEITHYYGVPSLFSAILDVSSSKDLQNLRCVTLGGEKLPAQIVKKIKEKNKEIEVNNEYGPTENSVVTTIMRDIQVEQEITIGRPLSNVDVYIVNCNHQLQPVGVVGELCIGGQGLARGYLNKPELTADKFVVNPFVPGERMYKTGDLAKWRSDGMIEYVGRVDEQVKVRGYRIELGEIESAILEYEKIKEAVVMVSEHTASEQMLCAYIVGEEDVLTLDLRSYLAKLLPSYMIPNYFIQLDSIPLTPNGKVDRKALPEPQTIGLMAREYVAPRNEIEAQLVLIWQEVLGIELIGITDNFFELGGHSLKATLLVAKIYEYMQIEMPLNVVFKHSTIMKIAEYITHQESENNVHQPILVNVEADREALSLNGEKQRKNIELPILLNEETDRNVFLFAPIGAQGVFYKKLAEQIPTASLYGFDFIEDDDRIQQYIESMIQTQSDGQYVLIGYSSGGNLAFEVAKEMERQGYSVSDLVLFDVYWKGKVFEQTKEEEEENIKIIMEELRENPGMFNMTREDFELYFANEFVKQSFTRKMRKYMSFYTQLVNYGEVEATIHLIQAEFEEEKIDENEKADEEEKTYLEEKWNEKAWNKAAKRFVKYNGYGAHSNMLGGDGLERNSSILKQILQGTFVVK.

The interval 467–1044 (DKTIHQLFTE…IQEISNYING (578 aa)) is domain 1 (proline-activating). Carrier domains are found at residues 971 to 1046 (VPTN…NGAK), 2006 to 2081 (APSS…ADGQ), 3052 to 3127 (RPRT…EETD), and 4090 to 4165 (APRN…THQE). Residues Ser1006, Ser2041, Ser3087, and Ser4125 each carry the O-(pantetheine 4'-phosphoryl)serine modification. The interval 1521 to 2080 (DHVAVGWKDQ…SALAQYIADG (560 aa)) is domain 2 (valine-activating). Positions 2538-3135 (YATNKIFHEL…TDTEQYMAIQ (598 aa)) are domain 3 (ornithine-activating). The interval 3591 to 4173 (IQELFEEQVK…QESENNVHQP (583 aa)) is domain 4 (leucine-activating).

This sequence belongs to the ATP-dependent AMP-binding enzyme family. Large multienzyme complex of GrsA and GrsB. It depends on pantetheine 4'-phosphate as a cofactor.

Its pathway is antibiotic biosynthesis; gramicidin S biosynthesis. This protein is a multifunctional enzyme, able to activate and polymerize the amino acids Pro, Val, Orn and Leu. Activation sites for these AA consist of individual domains. The sequence is that of Gramicidin S synthase 2 (grsB) from Aneurinibacillus migulanus (Bacillus migulanus).